The sequence spans 269 residues: Tryptophan synthase alpha chain (269 aa).

Active-site proton acceptor residues include Glu-49 and Asp-60.

The protein belongs to the TrpA family. As to quaternary structure, tetramer of two alpha and two beta chains.

The enzyme catalyses (1S,2R)-1-C-(indol-3-yl)glycerol 3-phosphate + L-serine = D-glyceraldehyde 3-phosphate + L-tryptophan + H2O. The protein operates within amino-acid biosynthesis; L-tryptophan biosynthesis; L-tryptophan from chorismate: step 5/5. Its function is as follows. The alpha subunit is responsible for the aldol cleavage of indoleglycerol phosphate to indole and glyceraldehyde 3-phosphate. The chain is Tryptophan synthase alpha chain from Ectopseudomonas mendocina (strain ymp) (Pseudomonas mendocina).